Consider the following 413-residue polypeptide: Multifunctional CCA protein (413 aa).

G8 and R11 together coordinate ATP. Residues G8 and R11 each contribute to the CTP site. The Mg(2+) site is built by E21 and D23. Residues R91, R137, and R140 each contribute to the ATP site. CTP is bound by residues R91, R137, and R140. The HD domain maps to 228-329 (CGIHTLMSLR…WRLLQRLDVL (102 aa)).

Belongs to the tRNA nucleotidyltransferase/poly(A) polymerase family. Bacterial CCA-adding enzyme type 1 subfamily. In terms of assembly, monomer. Can also form homodimers and oligomers. Requires Mg(2+) as cofactor. The cofactor is Ni(2+).

It carries out the reaction a tRNA precursor + 2 CTP + ATP = a tRNA with a 3' CCA end + 3 diphosphate. The enzyme catalyses a tRNA with a 3' CCA end + 2 CTP + ATP = a tRNA with a 3' CCACCA end + 3 diphosphate. In terms of biological role, catalyzes the addition and repair of the essential 3'-terminal CCA sequence in tRNAs without using a nucleic acid template. Adds these three nucleotides in the order of C, C, and A to the tRNA nucleotide-73, using CTP and ATP as substrates and producing inorganic pyrophosphate. tRNA 3'-terminal CCA addition is required both for tRNA processing and repair. Also involved in tRNA surveillance by mediating tandem CCA addition to generate a CCACCA at the 3' terminus of unstable tRNAs. While stable tRNAs receive only 3'-terminal CCA, unstable tRNAs are marked with CCACCA and rapidly degraded. The sequence is that of Multifunctional CCA protein from Acinetobacter baylyi (strain ATCC 33305 / BD413 / ADP1).